Consider the following 116-residue polypeptide: uncharacterized protein (116 aa).

This is an uncharacterized protein from Saccharomyces cerevisiae (strain ATCC 204508 / S288c) (Baker's yeast).